The sequence spans 122 residues: Large ribosomal subunit protein uL14c (122 aa).

The protein belongs to the universal ribosomal protein uL14 family. As to quaternary structure, part of the 50S ribosomal subunit.

The protein resides in the plastid. It is found in the chloroplast. Its function is as follows. Binds to 23S rRNA. The polypeptide is Large ribosomal subunit protein uL14c (Welwitschia mirabilis (Tree tumbo)).